The primary structure comprises 619 residues: Elongation factor 4 (619 aa).

One can recognise a tr-type G domain in the interval 17-198 (SVIRNFCIIA…RVVRAIPGPE (182 aa)). GTP is bound by residues 29-34 (DHGKST) and 145-148 (NKID).

The protein belongs to the TRAFAC class translation factor GTPase superfamily. Classic translation factor GTPase family. LepA subfamily.

The protein resides in the cell membrane. The enzyme catalyses GTP + H2O = GDP + phosphate + H(+). In terms of biological role, required for accurate and efficient protein synthesis under certain stress conditions. May act as a fidelity factor of the translation reaction, by catalyzing a one-codon backward translocation of tRNAs on improperly translocated ribosomes. Back-translocation proceeds from a post-translocation (POST) complex to a pre-translocation (PRE) complex, thus giving elongation factor G a second chance to translocate the tRNAs correctly. Binds to ribosomes in a GTP-dependent manner. The protein is Elongation factor 4 of Micrococcus luteus (strain ATCC 4698 / DSM 20030 / JCM 1464 / CCM 169 / CCUG 5858 / IAM 1056 / NBRC 3333 / NCIMB 9278 / NCTC 2665 / VKM Ac-2230) (Micrococcus lysodeikticus).